Consider the following 40-residue polypeptide: Light-harvesting protein B800/830/1020 beta-1 chain (40 aa).

Over 1–20 (ANDIRPLRDFEDEEAQEFHQ) the chain is Cytoplasmic. A bacteriochlorophyll contacts are provided by histidine 19 and histidine 37. Residues 21-40 (AAVQAFFLYVAVAFVAHLPV) form a helical membrane-spanning segment.

It belongs to the antenna complex beta subunit family. As to quaternary structure, the core complex is formed by different alpha and beta chains, binding bacteriochlorophyll molecules, and arranged most probably in tetrameric structures disposed around the reaction center. The non-pigmented gamma chains may constitute additional components.

It is found in the cell inner membrane. Its function is as follows. Antenna complexes are light-harvesting systems, which transfer the excitation energy to the reaction centers. The sequence is that of Light-harvesting protein B800/830/1020 beta-1 chain from Halorhodospira halochloris (Ectothiorhodospira halochloris).